Consider the following 463-residue polypeptide: Ribosomal protein uS12 methylthiotransferase RimO (463 aa).

The MTTase N-terminal domain occupies 11–126 (PKIGFVSLGC…VMEVVHTHCP (116 aa)). [4Fe-4S] cluster contacts are provided by Cys20, Cys56, Cys85, Cys161, Cys165, and Cys168. Residues 147–388 (LTPRHYAYLK…MAVAEEVSTA (242 aa)) form the Radical SAM core domain. A TRAM domain is found at 391–463 (QRRVGQTMQV…QGHDLVGVPV (73 aa)).

This sequence belongs to the methylthiotransferase family. RimO subfamily. The cofactor is [4Fe-4S] cluster.

The protein resides in the cytoplasm. It catalyses the reaction L-aspartate(89)-[ribosomal protein uS12]-hydrogen + (sulfur carrier)-SH + AH2 + 2 S-adenosyl-L-methionine = 3-methylsulfanyl-L-aspartate(89)-[ribosomal protein uS12]-hydrogen + (sulfur carrier)-H + 5'-deoxyadenosine + L-methionine + A + S-adenosyl-L-homocysteine + 2 H(+). In terms of biological role, catalyzes the methylthiolation of an aspartic acid residue of ribosomal protein uS12. The chain is Ribosomal protein uS12 methylthiotransferase RimO from Acidovorax sp. (strain JS42).